A 142-amino-acid polypeptide reads, in one-letter code: Large ribosomal subunit protein uL16 (142 aa).

This sequence belongs to the universal ribosomal protein uL16 family. Part of the 50S ribosomal subunit.

Its function is as follows. Binds 23S rRNA and is also seen to make contacts with the A and possibly P site tRNAs. This chain is Large ribosomal subunit protein uL16, found in Thermosipho africanus (strain TCF52B).